A 145-amino-acid polypeptide reads, in one-letter code: Basic phospholipase A2 PC10 (145 aa).

An N-terminal signal peptide occupies residues 1–21; sequence MYPAHLLLLLAVCVSLLGASA. A propeptide spanning residues 22-27 is cleaved from the precursor; that stretch reads IPPLPL. 7 disulfides stabilise this stretch: Cys-38-Cys-98, Cys-54-Cys-144, Cys-56-Cys-72, Cys-71-Cys-125, Cys-78-Cys-118, Cys-87-Cys-111, and Cys-105-Cys-116. Tyr-55, Gly-57, and Gly-59 together coordinate Ca(2+). Residue His-75 is part of the active site. Asp-76 is a binding site for Ca(2+). The active site involves Asp-119.

It belongs to the phospholipase A2 family. Group I subfamily. D49 sub-subfamily. Ca(2+) serves as cofactor.

It localises to the secreted. The catalysed reaction is a 1,2-diacyl-sn-glycero-3-phosphocholine + H2O = a 1-acyl-sn-glycero-3-phosphocholine + a fatty acid + H(+). PLA2 catalyzes the calcium-dependent hydrolysis of the 2-acyl groups in 3-sn-phosphoglycerides. This chain is Basic phospholipase A2 PC10, found in Laticauda laticaudata (Blue-ringed sea krait).